The chain runs to 142 residues: Small heat shock protein IbpB (142 aa).

Positions 25-136 constitute a sHSP domain; it reads GQEPQGFPPY…QPQRIAIGTT (112 aa).

Belongs to the small heat shock protein (HSP20) family. In terms of assembly, homodimer. Forms homomultimers of about 100-150 subunits at optimal growth temperatures. Conformation changes to oligomers at high temperatures or high ionic concentrations. The decrease in size of the multimers is accompanied by an increase in chaperone activity.

The protein resides in the cytoplasm. In terms of biological role, associates with aggregated proteins, together with IbpA, to stabilize and protect them from irreversible denaturation and extensive proteolysis during heat shock and oxidative stress. Aggregated proteins bound to the IbpAB complex are more efficiently refolded and reactivated by the ATP-dependent chaperone systems ClpB and DnaK/DnaJ/GrpE. Its activity is ATP-independent. The chain is Small heat shock protein IbpB from Serratia proteamaculans (strain 568).